Here is a 660-residue protein sequence, read N- to C-terminus: PAN2-PAN3 deadenylation complex subunit PAN3 (660 aa).

Residues 7 to 36 form a C3H1-type zinc finger; it reads SAKDTFCKNVLIYGYCKYENKGCAFSHTVK. Disordered stretches follow at residues 36-60 and 150-186; these read KPTS…TNAD and SPVM…PTSA. Positions 43–59 are enriched in low complexity; that stretch reads GSQGSNATTNSSGNTNA. A PABPC-interacting motif-2 (PAM-2) motif is present at residues 59-79; sequence ADMKKKFNFNTPSFQPSTVPN. Positions 150-159 are enriched in polar residues; that stretch reads SPVMAQSVST. A pseudokinase domain region spans residues 252–528; that stretch reads QTLPRSNLPD…LQEFNRNHLS (277 aa). ATP contacts are provided by residues Arg304, 358–365, and 415–416; these read DYFPNSNT and SK. Residues 529 to 567 adopt a coiled-coil conformation; sequence RRILNFCSNAQDSQDFMESQLSTELENARVFRLITKLNF. Positions 568–660 are knob domain; that stretch reads IIDRPEYDND…DSAFRTLTRG (93 aa).

This sequence belongs to the protein kinase superfamily. PAN3 family. As to quaternary structure, homodimer. Forms a heterotrimer with a catalytic subunit PAN2 to form the poly(A)-nuclease (PAN) deadenylation complex. Interacts (via PAM-2 motif) with poly(A)-binding protein PAB1 (via PABC domain), conferring substrate specificity of the enzyme complex.

It localises to the cytoplasm. Regulatory subunit of the poly(A)-nuclease (PAN) deadenylation complex, one of two cytoplasmic mRNA deadenylases involved in mRNA turnover. PAN specifically shortens poly(A) tails of RNA and the activity is stimulated by poly(A)-binding protein PAB1. PAN deadenylation is followed by rapid degradation of the shortened mRNA tails by the CCR4-NOT complex. Deadenylated mRNAs are then degraded by two alternative mechanisms, namely exosome-mediated 3'-5' exonucleolytic degradation, or deadenylation-dependent mRNA decaping and subsequent 5'-3' exonucleolytic degradation by XRN1. May also be involved in post-transcriptional maturation of mRNA poly(A) tails. PAN3 acts as a positive regulator for PAN activity, recruiting the catalytic subunit PAN2 to mRNA via its interaction with RNA and with PAB1. This Debaryomyces hansenii (strain ATCC 36239 / CBS 767 / BCRC 21394 / JCM 1990 / NBRC 0083 / IGC 2968) (Yeast) protein is PAN2-PAN3 deadenylation complex subunit PAN3.